We begin with the raw amino-acid sequence, 966 residues long: Leucine--tRNA ligase (966 aa).

The 'HIGH' region signature appears at 71-82 (PYPSGAGLHVGH). The segment at 561-580 (YSPRTFDPDDADTKPETPLS) is disordered. A compositionally biased stretch (basic and acidic residues) spans 571-580 (ADTKPETPLS). A 'KMSKS' region motif is present at residues 734-738 (KMGKS). An ATP-binding site is contributed by Lys-737.

It belongs to the class-I aminoacyl-tRNA synthetase family.

Its subcellular location is the cytoplasm. The enzyme catalyses tRNA(Leu) + L-leucine + ATP = L-leucyl-tRNA(Leu) + AMP + diphosphate. The chain is Leucine--tRNA ligase from Streptomyces coelicolor (strain ATCC BAA-471 / A3(2) / M145).